Reading from the N-terminus, the 297-residue chain is Phosphoribosylaminoimidazole-succinocarboxamide synthase (297 aa).

The protein belongs to the SAICAR synthetase family.

It carries out the reaction 5-amino-1-(5-phospho-D-ribosyl)imidazole-4-carboxylate + L-aspartate + ATP = (2S)-2-[5-amino-1-(5-phospho-beta-D-ribosyl)imidazole-4-carboxamido]succinate + ADP + phosphate + 2 H(+). It participates in purine metabolism; IMP biosynthesis via de novo pathway; 5-amino-1-(5-phospho-D-ribosyl)imidazole-4-carboxamide from 5-amino-1-(5-phospho-D-ribosyl)imidazole-4-carboxylate: step 1/2. This is Phosphoribosylaminoimidazole-succinocarboxamide synthase from Corynebacterium urealyticum (strain ATCC 43042 / DSM 7109).